A 158-amino-acid polypeptide reads, in one-letter code: C-type lectin mannose-binding isoform (158 aa).

Residues 1-20 form the signal peptide; the sequence is MGRFLLVTLSMLVVTFSLNE. Disulfide bonds link Cys26–Cys37, Cys54–Cys154, and Cys129–Cys146. Positions 33 to 155 constitute a C-type lectin domain; sequence KNGFCYKVFN…CEALYHFICQ (123 aa). The short motif at 119–121 is the Mannose-binding element; the sequence is EPN. Asn121 carries N-linked (GlcNAc...) asparagine glycosylation. 3 residues coordinate Ca(2+): Glu127, Asn142, and Asp143.

Belongs to the true venom lectin family. As to quaternary structure, homodimer; disulfide-linked. As to expression, expressed by the venom gland.

It localises to the secreted. Its function is as follows. Mannose-binding lectin that binds to and agglutinates erythrocytes in a calcium-dependent manner. This chain is C-type lectin mannose-binding isoform, found in Notechis scutatus scutatus (Mainland tiger snake).